Consider the following 311-residue polypeptide: RNA polymerase sigma factor SigA4 (311 aa).

The segment at 78 to 148 (MLKANLRLVV…TRAIDNHART (71 aa)) is sigma-70 factor domain-2. Positions 102–105 (DLIQ) match the Interaction with polymerase core subunit RpoC motif. Positions 157–234 (EKISRIKKMT…DPKSLEPMDA (78 aa)) are sigma-70 factor domain-3. The tract at residues 247–304 (WLAHLTEREQQVLQLRFGLHDGEQHTLAEIGRRLNVSRERIRQVEARALQKLRVLSQQ) is sigma-70 factor domain-4. The segment at residues 273 to 292 (LAEIGRRLNVSRERIRQVEA) is a DNA-binding region (H-T-H motif).

This sequence belongs to the sigma-70 factor family.

The protein localises to the cytoplasm. Functionally, sigma factors are initiation factors that promote the attachment of RNA polymerase to specific initiation sites and are then released. The polypeptide is RNA polymerase sigma factor SigA4 (sigA4) (Synechococcus elongatus (strain ATCC 33912 / PCC 7942 / FACHB-805) (Anacystis nidulans R2)).